The primary structure comprises 296 residues: Cytidine deaminase (296 aa).

2 CMP/dCMP-type deaminase domains span residues 47-167 (TEAE…FGPK) and 186-296 (DSAD…IDPV). 88–90 (NLE) serves as a coordination point for substrate. Residue H101 coordinates Zn(2+). E103 acts as the Proton donor in catalysis. Zn(2+) is bound by residues C128 and C131.

The protein belongs to the cytidine and deoxycytidylate deaminase family. Homodimer. Zn(2+) serves as cofactor.

It carries out the reaction cytidine + H2O + H(+) = uridine + NH4(+). It catalyses the reaction 2'-deoxycytidine + H2O + H(+) = 2'-deoxyuridine + NH4(+). In terms of biological role, this enzyme scavenges exogenous and endogenous cytidine and 2'-deoxycytidine for UMP synthesis. The polypeptide is Cytidine deaminase (Shewanella baltica (strain OS155 / ATCC BAA-1091)).